The chain runs to 216 residues: GTP cyclohydrolase 1 (216 aa).

Residues C108, H111, and C179 each coordinate Zn(2+).

It belongs to the GTP cyclohydrolase I family. As to quaternary structure, toroid-shaped homodecamer, composed of two pentamers of five dimers.

It carries out the reaction GTP + H2O = 7,8-dihydroneopterin 3'-triphosphate + formate + H(+). The protein operates within cofactor biosynthesis; 7,8-dihydroneopterin triphosphate biosynthesis; 7,8-dihydroneopterin triphosphate from GTP: step 1/1. This Shewanella oneidensis (strain ATCC 700550 / JCM 31522 / CIP 106686 / LMG 19005 / NCIMB 14063 / MR-1) protein is GTP cyclohydrolase 1.